The primary structure comprises 183 residues: Endoribonuclease YbeY (183 aa).

Zn(2+) is bound by residues H143, H147, and H153.

It belongs to the endoribonuclease YbeY family. It depends on Zn(2+) as a cofactor.

It is found in the cytoplasm. Single strand-specific metallo-endoribonuclease involved in late-stage 70S ribosome quality control and in maturation of the 3' terminus of the 16S rRNA. This Rickettsia bellii (strain OSU 85-389) protein is Endoribonuclease YbeY.